We begin with the raw amino-acid sequence, 200 residues long: MAGAAGPEIERLIQLLARLPGLGPRSARRAALHLIKKRDALMAPLASALQVAIDKIEVCSTCGNIDSQNPCTVCTDPRRDSSIIVVVADVADLWALERASATNGRYHVLGATLSPLDGVGPEDLTIDALVKRAHDPGVAEIILALNATVDGQTTAHYVTDLLQDANVKVTRLAHGVPVGGELDYLDEGTLSAAMRQRTLF.

The segment at 59 to 74 (CSTCGNIDSQNPCTVC) adopts a C4-type zinc-finger fold. Residues 82-177 (SIIVVVADVA…KVTRLAHGVP (96 aa)) form the Toprim domain.

This sequence belongs to the RecR family.

Functionally, may play a role in DNA repair. It seems to be involved in an RecBC-independent recombinational process of DNA repair. It may act with RecF and RecO. The chain is Recombination protein RecR from Rhodopseudomonas palustris (strain ATCC BAA-98 / CGA009).